A 171-amino-acid polypeptide reads, in one-letter code: NADH-quinone oxidoreductase subunit I 1 (171 aa).

4Fe-4S ferredoxin-type domains lie at 41–71 (LSRDPDGEERCVACYLCAAACPVDCIALQAT) and 81–110 (EFFRINFSRCIFCGFCEEACPTDAIQLTPD). [4Fe-4S] cluster-binding residues include cysteine 51, cysteine 54, cysteine 57, cysteine 61, cysteine 90, cysteine 93, cysteine 96, and cysteine 100.

Belongs to the complex I 23 kDa subunit family. NDH-1 is composed of 14 different subunits. Subunits NuoA, H, J, K, L, M, N constitute the membrane sector of the complex. The cofactor is [4Fe-4S] cluster.

It localises to the cell inner membrane. It carries out the reaction a quinone + NADH + 5 H(+)(in) = a quinol + NAD(+) + 4 H(+)(out). Its function is as follows. NDH-1 shuttles electrons from NADH, via FMN and iron-sulfur (Fe-S) centers, to quinones in the respiratory chain. The immediate electron acceptor for the enzyme in this species is believed to be ubiquinone. Couples the redox reaction to proton translocation (for every two electrons transferred, four hydrogen ions are translocated across the cytoplasmic membrane), and thus conserves the redox energy in a proton gradient. In Nitrosospira multiformis (strain ATCC 25196 / NCIMB 11849 / C 71), this protein is NADH-quinone oxidoreductase subunit I 1.